Consider the following 158-residue polypeptide: Large ribosomal subunit protein uL13 (158 aa).

The protein belongs to the universal ribosomal protein uL13 family. As to quaternary structure, part of the 50S ribosomal subunit.

This protein is one of the early assembly proteins of the 50S ribosomal subunit, although it is not seen to bind rRNA by itself. It is important during the early stages of 50S assembly. The sequence is that of Large ribosomal subunit protein uL13 from Rickettsia canadensis (strain McKiel).